The chain runs to 20 residues: Cytochrome P450-RR1 (20 aa).

This sequence belongs to the cytochrome P450 family. Requires heme as cofactor.

Its function is as follows. P450-RRI catalyzes the O-dealkylation of 2-ethoxyphenol and 2-methoxyphenol to produce catechol. The cytochrome binds other ortho-substituted phenols, including 2-ethoxyphenol, 2-methylphenol and 2-chlorophenol. The protein is Cytochrome P450-RR1 of Rhodococcus rhodochrous.